Consider the following 769-residue polypeptide: Discoidin, CUB and LCCL domain-containing protein 2 (769 aa).

Over residues 1–29 (MASRAPLRAARSPQDPGGRAAPAATGRAP) the composition is skewed to low complexity. The tract at residues 1–39 (MASRAPLRAARSPQDPGGRAAPAATGRAPLPSAGWCPLP) is disordered. A signal peptide spans 1–63 (MASRAPLRAA…LLLLLPDAGA (63 aa)). Topologically, residues 64-523 (QKGDGCGHTV…VTPSVTKDVA (460 aa)) are extracellular. 2 disulfide bridges follow: Cys69-Cys96 and Cys123-Cys145. Residues 69–184 (CGHTVLGPES…RGFLASYSVI (116 aa)) enclose the CUB domain. An N-linked (GlcNAc...) asparagine glycan is attached at Asn92. The N-linked (GlcNAc...) asparagine glycan is linked to Asn152. Residues 184 to 282 (IDKQDLITCL…MVGYLSTSLF (99 aa)) form the LCCL domain. An intrachain disulfide couples Cys212 to Cys234. A glycan (N-linked (GlcNAc...) asparagine) is linked at Asn269. Cys289 and Cys446 form a disulfide bridge. Positions 289-446 (CYGTLGMESG…IAMKVELLGC (158 aa)) constitute an F5/8 type C domain. Residues 455 to 476 (PKLTQPPPPRNSNNLKNTTVHP) are disordered. A compositionally biased stretch (polar residues) spans 465-474 (NSNNLKNTTV). 2 N-linked (GlcNAc...) asparagine glycosylation sites follow: Asn471 and Asn511. The chain crosses the membrane as a helical span at residues 524–544 (LAAVLVPVLVMALTTLILILV). Residues 545–769 (CAWHWRNRKK…EKFDAFKETL (225 aa)) are Cytoplasmic-facing. Residue Ser601 is modified to Phosphoserine. The interval 719–769 (SCSSGQAQYDTPKGGKPAAAPEELVYQVPQSTQEASGAGRDEKFDAFKETL) is disordered. The segment covering 757 to 769 (GRDEKFDAFKETL) has biased composition (basic and acidic residues).

The protein localises to the membrane. The protein is Discoidin, CUB and LCCL domain-containing protein 2 (Dcbld2) of Rattus norvegicus (Rat).